A 111-amino-acid chain; its full sequence is Large ribosomal subunit protein uL22 (111 aa).

This sequence belongs to the universal ribosomal protein uL22 family. Part of the 50S ribosomal subunit.

This protein binds specifically to 23S rRNA; its binding is stimulated by other ribosomal proteins, e.g. L4, L17, and L20. It is important during the early stages of 50S assembly. It makes multiple contacts with different domains of the 23S rRNA in the assembled 50S subunit and ribosome. Functionally, the globular domain of the protein is located near the polypeptide exit tunnel on the outside of the subunit, while an extended beta-hairpin is found that lines the wall of the exit tunnel in the center of the 70S ribosome. The chain is Large ribosomal subunit protein uL22 from Chlamydia abortus (strain DSM 27085 / S26/3) (Chlamydophila abortus).